A 435-amino-acid polypeptide reads, in one-letter code: Phosphomethylpyrimidine synthase (435 aa).

Residues Asn67, Met96, Tyr125, His163, 185 to 187 (SRG), 226 to 229 (DGLR), and Glu265 contribute to the substrate site. His269 is a binding site for Zn(2+). Tyr292 contributes to the substrate binding site. A Zn(2+)-binding site is contributed by His333. Positions 408, 411, and 415 each coordinate [4Fe-4S] cluster.

The protein belongs to the ThiC family. [4Fe-4S] cluster serves as cofactor.

The enzyme catalyses 5-amino-1-(5-phospho-beta-D-ribosyl)imidazole + S-adenosyl-L-methionine = 4-amino-2-methyl-5-(phosphooxymethyl)pyrimidine + CO + 5'-deoxyadenosine + formate + L-methionine + 3 H(+). Its pathway is cofactor biosynthesis; thiamine diphosphate biosynthesis. Functionally, catalyzes the synthesis of the hydroxymethylpyrimidine phosphate (HMP-P) moiety of thiamine from aminoimidazole ribotide (AIR) in a radical S-adenosyl-L-methionine (SAM)-dependent reaction. The polypeptide is Phosphomethylpyrimidine synthase (Thermus thermophilus (strain ATCC BAA-163 / DSM 7039 / HB27)).